The sequence spans 361 residues: Carbamoyl phosphate synthase small chain (361 aa).

The CPSase stretch occupies residues methionine 1–aspartate 173. The L-glutamine site is built by serine 45, glycine 225, and glycine 227. Positions glutamate 177–histidine 361 constitute a Glutamine amidotransferase type-1 domain. Cysteine 252 serves as the catalytic Nucleophile. L-glutamine contacts are provided by leucine 253, glutamine 256, asparagine 294, glycine 296, and phenylalanine 297. Active-site residues include histidine 337 and glutamate 339.

The protein belongs to the CarA family. Composed of two chains; the small (or glutamine) chain promotes the hydrolysis of glutamine to ammonia, which is used by the large (or ammonia) chain to synthesize carbamoyl phosphate. Tetramer of heterodimers (alpha,beta)4.

It catalyses the reaction hydrogencarbonate + L-glutamine + 2 ATP + H2O = carbamoyl phosphate + L-glutamate + 2 ADP + phosphate + 2 H(+). It carries out the reaction L-glutamine + H2O = L-glutamate + NH4(+). It functions in the pathway amino-acid biosynthesis; L-arginine biosynthesis; carbamoyl phosphate from bicarbonate: step 1/1. Its pathway is pyrimidine metabolism; UMP biosynthesis via de novo pathway; (S)-dihydroorotate from bicarbonate: step 1/3. Small subunit of the glutamine-dependent carbamoyl phosphate synthetase (CPSase). CPSase catalyzes the formation of carbamoyl phosphate from the ammonia moiety of glutamine, carbonate, and phosphate donated by ATP, constituting the first step of 2 biosynthetic pathways, one leading to arginine and/or urea and the other to pyrimidine nucleotides. The small subunit (glutamine amidotransferase) binds and cleaves glutamine to supply the large subunit with the substrate ammonia. The chain is Carbamoyl phosphate synthase small chain from Methanopyrus kandleri (strain AV19 / DSM 6324 / JCM 9639 / NBRC 100938).